Here is a 335-residue protein sequence, read N- to C-terminus: MKKWFVCLLGLVALTVQAADSRPAFSRIVMFGDSLSDTGKMYSKMRGYLPSSPPYYEGRFSNGPVWLEQLTNEFPGLTIANEAEGGPTAVAYNKISWNPKYQVINNLDYEVTQFLQKDSFKPDDLVILWVGANDYLAYGWNTEQDAKRVRDAISDAANRMVLNGAKEILLFNLPDLGQNPSARSQKVVEAASHVSAYHNQLLLNLARQLAPTGMVKLFEIDKQFAEMLRDPQNFGLSDTENACYGGSYVWKPFASRSASTDSQLSAFNPQERLAIAGNPLLAQAVASPMAARSASTLNCEGKMFWDQVHPTTVVHAALSEPAATFIESQYEFLAH.

A signal peptide spans 1 to 18 (MKKWFVCLLGLVALTVQA). Ser34 (nucleophile) is an active-site residue. Residues Asp306 and His309 contribute to the active site.

Belongs to the 'GDSL' lipolytic enzyme family.

The catalysed reaction is a sterol + a 1,2-diacyl-sn-glycero-3-phosphocholine = a sterol ester + a 1-acyl-sn-glycero-3-phosphocholine. Fatty acid transfer between phosphatidylcholine and cholesterol. This Aeromonas hydrophila protein is Phosphatidylcholine-sterol acyltransferase.